The chain runs to 650 residues: Pentatricopeptide repeat-containing protein At1g51965, mitochondrial (650 aa).

A mitochondrion-targeting transit peptide spans 1-23; it reads MKLLRRRFFNSVNTITRPNRRHY. PPR repeat units follow at residues 132 to 169, 170 to 200, 202 to 236, 237 to 267, 269 to 303, 304 to 338, 339 to 369, 371 to 405, 406 to 440, 441 to 475, 476 to 510, 511 to 545, 546 to 580, and 581 to 615; these read DPFL…NVHG, NIST…WDLK, NSFT…GHKL, DIFA…RHCR, DEYT…GLTL, NVVG…GCRP, NEYT…SKRY, TQGI…PVKG, ERDS…GVVT, DTMM…GPSP, DIFT…DCKP, DIIS…GLNP, DVVT…GCQP, and NIVT…GLTP.

This sequence belongs to the PPR family. P subfamily.

It is found in the mitochondrion. The protein is Pentatricopeptide repeat-containing protein At1g51965, mitochondrial of Arabidopsis thaliana (Mouse-ear cress).